Reading from the N-terminus, the 239-residue chain is Type II restriction enzyme Eco47II (239 aa).

The catalysed reaction is Endonucleolytic cleavage of DNA to give specific double-stranded fragments with terminal 5'-phosphates.. A P subtype restriction enzyme that recognizes the double-stranded sequence 5'-GGNCC-3'; the cleavage site is unknown. In Escherichia coli, this protein is Type II restriction enzyme Eco47II.